Here is a 245-residue protein sequence, read N- to C-terminus: DNA polymerase sliding clamp (245 aa).

The protein belongs to the PCNA family. As to quaternary structure, homotrimer. The subunits circularize to form a toroid; DNA passes through its center. Replication factor C (RFC) is required to load the toroid on the DNA.

In terms of biological role, sliding clamp subunit that acts as a moving platform for DNA processing. Responsible for tethering the catalytic subunit of DNA polymerase and other proteins to DNA during high-speed replication. This chain is DNA polymerase sliding clamp, found in Archaeoglobus fulgidus (strain ATCC 49558 / DSM 4304 / JCM 9628 / NBRC 100126 / VC-16).